The following is a 63-amino-acid chain: Cytochrome c oxidase subunit 7C, mitochondrial (63 aa).

The transit peptide at 1-16 (MLGQSIRRFTTSVVRR) directs the protein to the mitochondrion. Over 17-33 (SHYEEGPGKNLPFSVEN) the chain is Mitochondrial matrix. At lysine 25 the chain carries N6-acetyllysine; alternate. Position 25 is an N6-succinyllysine; alternate (lysine 25). A helical membrane pass occupies residues 34-60 (KWSLLAKMCLYFGSAFATPFLVVRHQL). The Mitochondrial intermembrane segment spans residues 61–63 (LKT).

Belongs to the cytochrome c oxidase VIIc family. In terms of assembly, component of the cytochrome c oxidase (complex IV, CIV), a multisubunit enzyme composed of 14 subunits. The complex is composed of a catalytic core of 3 subunits MT-CO1, MT-CO2 and MT-CO3, encoded in the mitochondrial DNA, and 11 supernumerary subunits COX4I1 (or COX4I2), COX5A, COX5B, COX6A1 (or COX6A2), COX6B1 (or COX6B2), COX6C, COX7A2 (or COX7A1), COX7B, COX7C, COX8A and NDUFA4, which are encoded in the nuclear genome. The complex exists as a monomer or a dimer and forms supercomplexes (SCs) in the inner mitochondrial membrane with NADH-ubiquinone oxidoreductase (complex I, CI) and ubiquinol-cytochrome c oxidoreductase (cytochrome b-c1 complex, complex III, CIII), resulting in different assemblies (supercomplex SCI(1)III(2)IV(1) and megacomplex MCI(2)III(2)IV(2)). Interacts with RAB5IF.

The protein localises to the mitochondrion inner membrane. It functions in the pathway energy metabolism; oxidative phosphorylation. Its function is as follows. Component of the cytochrome c oxidase, the last enzyme in the mitochondrial electron transport chain which drives oxidative phosphorylation. The respiratory chain contains 3 multisubunit complexes succinate dehydrogenase (complex II, CII), ubiquinol-cytochrome c oxidoreductase (cytochrome b-c1 complex, complex III, CIII) and cytochrome c oxidase (complex IV, CIV), that cooperate to transfer electrons derived from NADH and succinate to molecular oxygen, creating an electrochemical gradient over the inner membrane that drives transmembrane transport and the ATP synthase. Cytochrome c oxidase is the component of the respiratory chain that catalyzes the reduction of oxygen to water. Electrons originating from reduced cytochrome c in the intermembrane space (IMS) are transferred via the dinuclear copper A center (CU(A)) of subunit 2 and heme A of subunit 1 to the active site in subunit 1, a binuclear center (BNC) formed by heme A3 and copper B (CU(B)). The BNC reduces molecular oxygen to 2 water molecules using 4 electrons from cytochrome c in the IMS and 4 protons from the mitochondrial matrix. This chain is Cytochrome c oxidase subunit 7C, mitochondrial (COX7C), found in Homo sapiens (Human).